The following is a 212-amino-acid chain: Pyrrolidone-carboxylate peptidase (212 aa).

Residues E80, C143, and H165 contribute to the active site.

It belongs to the peptidase C15 family. As to quaternary structure, homotetramer.

Its subcellular location is the cytoplasm. It carries out the reaction Release of an N-terminal pyroglutamyl group from a polypeptide, the second amino acid generally not being Pro.. Its function is as follows. Removes 5-oxoproline from various penultimate amino acid residues except L-proline. The protein is Pyrrolidone-carboxylate peptidase of Vibrio vulnificus (strain YJ016).